The sequence spans 739 residues: Phosphoribosylformylglycinamidine synthase subunit PurL (739 aa).

The active site involves histidine 52. Residues tyrosine 55 and lysine 94 each coordinate ATP. Mg(2+) is bound at residue glutamate 96. Residues 97–100 (SHNH) and arginine 119 each bind substrate. Residue histidine 98 is the Proton acceptor of the active site. Position 120 (aspartate 120) interacts with Mg(2+). A substrate-binding site is contributed by glutamine 243. Position 271 (aspartate 271) interacts with Mg(2+). Substrate is bound at residue 315 to 317 (ESQ). The ATP site is built by aspartate 498 and glycine 535. Asparagine 536 contacts Mg(2+). Substrate is bound at residue serine 538.

This sequence belongs to the FGAMS family. In terms of assembly, monomer. Part of the FGAM synthase complex composed of 1 PurL, 1 PurQ and 2 PurS subunits.

Its subcellular location is the cytoplasm. It carries out the reaction N(2)-formyl-N(1)-(5-phospho-beta-D-ribosyl)glycinamide + L-glutamine + ATP + H2O = 2-formamido-N(1)-(5-O-phospho-beta-D-ribosyl)acetamidine + L-glutamate + ADP + phosphate + H(+). It functions in the pathway purine metabolism; IMP biosynthesis via de novo pathway; 5-amino-1-(5-phospho-D-ribosyl)imidazole from N(2)-formyl-N(1)-(5-phospho-D-ribosyl)glycinamide: step 1/2. Functionally, part of the phosphoribosylformylglycinamidine synthase complex involved in the purines biosynthetic pathway. Catalyzes the ATP-dependent conversion of formylglycinamide ribonucleotide (FGAR) and glutamine to yield formylglycinamidine ribonucleotide (FGAM) and glutamate. The FGAM synthase complex is composed of three subunits. PurQ produces an ammonia molecule by converting glutamine to glutamate. PurL transfers the ammonia molecule to FGAR to form FGAM in an ATP-dependent manner. PurS interacts with PurQ and PurL and is thought to assist in the transfer of the ammonia molecule from PurQ to PurL. The chain is Phosphoribosylformylglycinamidine synthase subunit PurL from Caulobacter vibrioides (strain ATCC 19089 / CIP 103742 / CB 15) (Caulobacter crescentus).